Here is a 308-residue protein sequence, read N- to C-terminus: Taste receptor type 2 member 41 (308 aa).

The Extracellular portion of the chain corresponds to 1 to 6 (MLSTVS). Residues 7-27 (VFFMSIFVLLCFLGILANGFI) traverse the membrane as a helical segment. Over 28–60 (VLMLSREWLWRGRLLPSDMILLSLGTSRFCQQC) the chain is Cytoplasmic. The chain crosses the membrane as a helical span at residues 61-81 (VGLVNSFYYSLHLVEYSRSLA). Residues 82–90 (RQLISLHMD) are Extracellular-facing. The helical transmembrane segment at 91-111 (FLNSATFWFGTWLSVLFCIKI) threads the bilayer. The Cytoplasmic segment spans residues 112-128 (ANFSHPAFLWLKWRFPA). Residues 129–149 (LVPWLLLGSILVSFIVTLMFF) traverse the membrane as a helical segment. The Extracellular portion of the chain corresponds to 150 to 184 (WGNHTVYQAFLRRKFSGNTTFKEWNRRLEIDYFMP). N-linked (GlcNAc...) asparagine glycans are attached at residues asparagine 152 and asparagine 167. The helical transmembrane segment at 185 to 205 (LKLVTTSIPCSLFLVSILLLI) threads the bilayer. The Cytoplasmic segment spans residues 206 to 239 (NSLRRHSQRMQHNAHSLQDPNTQAHSRALKSLIS). A helical membrane pass occupies residues 240 to 260 (FLVLYALSYVSMVIDATVVIS). Residues 261 to 264 (SDNV) lie on the Extracellular side of the membrane. Residues 265–285 (WYWPWQIILYLCMSVHPFILI) traverse the membrane as a helical segment. The Cytoplasmic portion of the chain corresponds to 286–308 (TNNLKFRGTFRQLLLLARGFWVT).

This sequence belongs to the G-protein coupled receptor T2R family. In terms of tissue distribution, expressed in subsets of taste receptor cells of the tongue and palate epithelium and exclusively in gustducin-positive cells. Expressed in 15% taste bud cells in circumvallate and foliate papillae but only in 2% in fungiform papillae. Expressed in the duodenum, antrum and fundus (part of the stomach).

Its subcellular location is the membrane. Functionally, receptor that may play a role in the perception of bitterness and is gustducin-linked. May play a role in sensing the chemical composition of the gastrointestinal content. The activity of this receptor may stimulate alpha gustducin, mediate PLC-beta-2 activation and lead to the gating of TRPM5. In Rattus norvegicus (Rat), this protein is Taste receptor type 2 member 41 (Tas2r41).